The primary structure comprises 294 residues: ATP phosphoribosyltransferase (294 aa).

Belongs to the ATP phosphoribosyltransferase family. Long subfamily. The cofactor is Mg(2+).

It localises to the cytoplasm. It carries out the reaction 1-(5-phospho-beta-D-ribosyl)-ATP + diphosphate = 5-phospho-alpha-D-ribose 1-diphosphate + ATP. It functions in the pathway amino-acid biosynthesis; L-histidine biosynthesis; L-histidine from 5-phospho-alpha-D-ribose 1-diphosphate: step 1/9. Its activity is regulated as follows. Feedback inhibited by histidine. Catalyzes the condensation of ATP and 5-phosphoribose 1-diphosphate to form N'-(5'-phosphoribosyl)-ATP (PR-ATP). Has a crucial role in the pathway because the rate of histidine biosynthesis seems to be controlled primarily by regulation of HisG enzymatic activity. This chain is ATP phosphoribosyltransferase, found in Chlorobium luteolum (strain DSM 273 / BCRC 81028 / 2530) (Pelodictyon luteolum).